Consider the following 512-residue polypeptide: Kynurenine 3-monooxygenase (512 aa).

Belongs to the aromatic-ring hydroxylase family. KMO subfamily. FAD is required as a cofactor.

The protein resides in the mitochondrion outer membrane. The catalysed reaction is L-kynurenine + NADPH + O2 + H(+) = 3-hydroxy-L-kynurenine + NADP(+) + H2O. It functions in the pathway cofactor biosynthesis; NAD(+) biosynthesis; quinolinate from L-kynurenine: step 1/3. In terms of biological role, catalyzes the hydroxylation of L-kynurenine (L-Kyn) to form 3-hydroxy-L-kynurenine (L-3OHKyn). Required for synthesis of quinolinic acid. The chain is Kynurenine 3-monooxygenase (nic-3) from Neurospora crassa (strain ATCC 24698 / 74-OR23-1A / CBS 708.71 / DSM 1257 / FGSC 987).